A 380-amino-acid chain; its full sequence is Cytochrome b (380 aa).

4 consecutive transmembrane segments (helical) span residues 34–54, 78–99, 114–134, and 179–199; these read FGSLLGICLMTQILTGLLLAM, WLIRNLHANGASFFFICIYLHI, WNTGILLLLTLMATAFVGYVL, and FFALHFLLPFMIAGLTLIHLT. The heme b site is built by H84 and H98. Heme b contacts are provided by H183 and H197. H202 contributes to the a ubiquinone binding site. The next 4 membrane-spanning stretches (helical) occupy residues 227-247, 289-309, 321-341, and 348-368; these read LKDILGFTLMFLPLTALALFS, LGGVLALAASVLVLFLSPLLH, LSQLLFWLLVTNLFILTWIGS, and FIIIGQLASITYFTILLVLFP.

It belongs to the cytochrome b family. As to quaternary structure, the cytochrome bc1 complex contains 11 subunits: 3 respiratory subunits (MT-CYB, CYC1 and UQCRFS1), 2 core proteins (UQCRC1 and UQCRC2) and 6 low-molecular weight proteins (UQCRH/QCR6, UQCRB/QCR7, UQCRQ/QCR8, UQCR10/QCR9, UQCR11/QCR10 and a cleavage product of UQCRFS1). This cytochrome bc1 complex then forms a dimer. Requires heme b as cofactor.

It is found in the mitochondrion inner membrane. Its function is as follows. Component of the ubiquinol-cytochrome c reductase complex (complex III or cytochrome b-c1 complex) that is part of the mitochondrial respiratory chain. The b-c1 complex mediates electron transfer from ubiquinol to cytochrome c. Contributes to the generation of a proton gradient across the mitochondrial membrane that is then used for ATP synthesis. The chain is Cytochrome b (MT-CYB) from Thalassarche impavida (Albatross).